Here is a 733-residue protein sequence, read N- to C-terminus: Catalase-peroxidase (733 aa).

The disordered stretch occupies residues 1-25 (MNEERKCPITGATHKPSAEKGRSNH). Basic and acidic residues predominate over residues 16–25 (PSAEKGRSNH). Residues 96 to 219 (WHSAGTYRTS…LAAVQMGLIY (124 aa)) constitute a cross-link (tryptophyl-tyrosyl-methioninium (Trp-Tyr) (with M-245)). Catalysis depends on histidine 97, which acts as the Proton acceptor. The segment at residues 219-245 (YVNPEGPNGKPDPLAAAKDIRETFARM) is a cross-link (tryptophyl-tyrosyl-methioninium (Tyr-Met) (with W-96)). Residue histidine 260 participates in heme b binding.

The protein belongs to the peroxidase family. Peroxidase/catalase subfamily. Homodimer or homotetramer. Requires heme b as cofactor. Post-translationally, formation of the three residue Trp-Tyr-Met cross-link is important for the catalase, but not the peroxidase activity of the enzyme.

The catalysed reaction is H2O2 + AH2 = A + 2 H2O. It carries out the reaction 2 H2O2 = O2 + 2 H2O. Its function is as follows. Bifunctional enzyme with both catalase and broad-spectrum peroxidase activity. This Chlorobium chlorochromatii (strain CaD3) protein is Catalase-peroxidase.